Consider the following 170-residue polypeptide: Adenine phosphoribosyltransferase (170 aa).

It belongs to the purine/pyrimidine phosphoribosyltransferase family. In terms of assembly, homodimer.

It localises to the cytoplasm. It catalyses the reaction AMP + diphosphate = 5-phospho-alpha-D-ribose 1-diphosphate + adenine. It participates in purine metabolism; AMP biosynthesis via salvage pathway; AMP from adenine: step 1/1. Catalyzes a salvage reaction resulting in the formation of AMP, that is energically less costly than de novo synthesis. This chain is Adenine phosphoribosyltransferase, found in Streptococcus sanguinis (strain SK36).